We begin with the raw amino-acid sequence, 579 residues long: MSQQGTIYRVAGPVVTAVGLNARMYDVVKVGNEGLMGEVIEIDNDKAIIQVYEDTSGVRPGEPVENTGMPLSVELGPGLLTSIYDGIQRPLEVLKEKMGNFITRGVSAPGLSRTKKWKFVPVVKAGDKVKGGIVIGTVQETKTIVHKIMVPPNVGETTIKDIKEGEFTVEDVIGHLENGTELKLMHKWPVRVPRPYVEKLRPDIPLITGQRVLDGLFPIAKGGTAAIPGPFGSGKTVTQQQLAKWSDAEIVVYIGCGERGNEMTEVLAEFPHLTDPKTGNPLMDRTVLIANTSNMPVAAREASCYTGITIAEYYRDMGYGVSLMADSTSRWAEAMREISSRLEEMPGEEGYPAYLAARLSEFYERAGRVITPIGKEGSVTVIGAVSPAGGDISEPVTQNTLRIVKVFWALDAKLAQRRHFPSINWLNSYSLYQDSLKDWYDKNISPEWNQLKAESMELLQRESELQEIVQLVGSDALPEDQQLTIEIARMIREIFLQQNAYHEVDTYCSLDKQLKMLKSIMQFGAYARTALASGVPMSKILNLNSKNDLAKVKFEANYDAYLTKVNDDMKKEFKSLEAA.

Residue 229-236 participates in ATP binding; sequence GPFGSGKT.

Belongs to the ATPase alpha/beta chains family. As to quaternary structure, has multiple subunits with at least A(3), B(3), C, D, E, F, H, I and proteolipid K(x).

It is found in the cell membrane. The catalysed reaction is ATP + H2O + 4 H(+)(in) = ADP + phosphate + 5 H(+)(out). Its function is as follows. Component of the A-type ATP synthase that produces ATP from ADP in the presence of a proton gradient across the membrane. The A chain is the catalytic subunit. The protein is A-type ATP synthase subunit A of Methanocella arvoryzae (strain DSM 22066 / NBRC 105507 / MRE50).